The chain runs to 285 residues: MGDPELDYTIEFPEPSLQGCPWDPEREPVVILLGWGGCKDQYLAKYSAIYHNQGCTVIKYTAAWNAVFISESLGFSSLREDAKKLLELLFDYEIEKSPILFHVFSNGGFMLYRYIVELLHSHCRLNKLHVVGTIFDSAPGNRNVIGSVRALDTILRTSTNNAIRFLALAAFAIMVIILRIVLYPVTKFLHENHYDAMKKDSSRWPQLYLYSRADPIISYIDVESMIAARRRCCLPTEALDFGKSEHVSHFRRFPHRYSEMCTSFLRDCVRKAAVSMLTSEHPVSF.

Residues 165–185 form a helical membrane-spanning segment; that stretch reads FLALAAFAIMVIILRIVLYPV.

The protein belongs to the TMEM53 family.

The protein resides in the nucleus outer membrane. Its function is as follows. Ensures normal bone formation, through the negative regulation of bone morphogenetic protein (BMP) signaling in osteoblast lineage cells by blocking cytoplasm-nucleus translocation of phosphorylated SMAD proteins. This is Transmembrane protein 53-B (tmem53-b) from Xenopus laevis (African clawed frog).